The sequence spans 554 residues: Formate--tetrahydrofolate ligase (554 aa).

An ATP-binding site is contributed by 67–74; sequence TPTGEGKT.

Belongs to the formate--tetrahydrofolate ligase family.

It carries out the reaction (6S)-5,6,7,8-tetrahydrofolate + formate + ATP = (6R)-10-formyltetrahydrofolate + ADP + phosphate. It functions in the pathway one-carbon metabolism; tetrahydrofolate interconversion. The chain is Formate--tetrahydrofolate ligase from Finegoldia magna (strain ATCC 29328 / DSM 20472 / WAL 2508) (Peptostreptococcus magnus).